Reading from the N-terminus, the 255-residue chain is 5'-nucleotidase SurE (255 aa).

Residues Asp-8, Asp-9, Ser-40, and Asn-93 each contribute to the a divalent metal cation site.

It belongs to the SurE nucleotidase family. A divalent metal cation serves as cofactor.

It localises to the cytoplasm. It carries out the reaction a ribonucleoside 5'-phosphate + H2O = a ribonucleoside + phosphate. In terms of biological role, nucleotidase that shows phosphatase activity on nucleoside 5'-monophosphates. The protein is 5'-nucleotidase SurE of Nitrobacter hamburgensis (strain DSM 10229 / NCIMB 13809 / X14).